The sequence spans 392 residues: MPVLPELSLNERRLVELIFKNRGVARIELAQMSGMTGATVTRLVASLLDLGLITEEADRSGAQGQPRRLLQLQARRFFAAGVTFSVTRMEVVIIDLSGSIVATRSVEVHTASPMEVVEAAQAAVDDMLAALSIQKNDLVGIGVSVPGNFGTASNLLKAHPFFPAFEDGQAIEAFREAFDVPCHVENDGTAAALGEYVFAGDNVLDDPLFFIHIGHGVGGGAVIDGRPYGGAHGNACLPGVLYPYDQPRPSGQDLLATLHAAGFHLRDFEEMDAMPQAARSTVIEWITRAGAQLRQAVRVATAFFDPARIVVGGRLPGDLNKRLVETILSEPIEGPSRGLPTAPVSVSRLGIRAGAVGAGCVPFFRAFFTGAVANGGSAYLNGRRPFPRTPAQ.

Belongs to the ROK (NagC/XylR) family.

This is an uncharacterized protein from Sinorhizobium fredii (strain NBRC 101917 / NGR234).